The chain runs to 62 residues: Protein DsrB (62 aa).

Belongs to the DsrB family.

The polypeptide is Protein DsrB (Shigella boydii serotype 18 (strain CDC 3083-94 / BS512)).